The chain runs to 217 residues: Transcription antitermination protein NusB (217 aa).

This sequence belongs to the NusB family.

Functionally, involved in transcription antitermination. Required for transcription of ribosomal RNA (rRNA) genes. Binds specifically to the boxA antiterminator sequence of the ribosomal RNA (rrn) operons. The polypeptide is Transcription antitermination protein NusB (Microcystis aeruginosa (strain NIES-843 / IAM M-2473)).